A 323-amino-acid chain; its full sequence is MSGSFWTSTQRHHWQYTKASLAKERQKLWLLECQLFPQGLNIVMDSKQNGIEQSITKNIPITHRDLHYDKDYNLRIYCYFLIMKLGRRLNIRQYALATAHIYLSRFLIKASVREINLYMLVTTCVYLACKVEECPQYIRTLVSEARTLWPEFIPPDPTKVTEFEFYLLEELESYLIVHHPYQSLKQIVQVLKQPPFQITLSSDDLQNCWSLINDSYINDVHLLYPPHIIAVACLFITISIHGKPTKGSSLASAASEAIRDPKNSSSPVQIAFNRFMAESLVDLEEVMDTIQEQITLYDHWDKYHEQWIKFLLHTLYLRPASAI.

Residues 45-176 (DSKQNGIEQS…LLEELESYLI (132 aa)) form the Cyclin N-terminal domain.

Belongs to the cyclin family. Cyclin C subfamily. In terms of assembly, component of the SRB8-11 complex which consists of SRB8, SSN2/SRB9, SSN3/SRB10 and SSN8/SRB11. The SRB8-11 complex associates with the Mediator complex. The SSN3/SRB10 and SSN8/SRB11 kinase-cyclin pair also associate with the RNA polymerase II holoenzyme. Interacts with ASK10.

The protein localises to the nucleus. Functionally, component of the SRB8-11 complex. The SRB8-11 complex is a regulatory module of the Mediator complex which is itself involved in regulation of basal and activated RNA polymerase II-dependent transcription. The SRB8-11 complex may be involved in the transcriptional repression of a subset of genes regulated by Mediator. It may inhibit the association of the Mediator complex with RNA polymerase II to form the holoenzyme complex. The SRB8-11 complex phosphorylates the C-terminal domain (CTD) of the largest subunit of RNA polymerase II RPB1 at serines 2 and 5. The SSN3/SRB10 and SSN8/SRB11 kinase-cyclin pair may also positively and negatively regulate numerous transcriptional activators in response to changes in nutritional and physiological conditions. The sequence is that of RNA polymerase II holoenzyme cyclin-like subunit (SSN8) from Saccharomyces cerevisiae (strain ATCC 204508 / S288c) (Baker's yeast).